The sequence spans 364 residues: Dual-specificity RNA methyltransferase RlmN (364 aa).

Glu-91 functions as the Proton acceptor in the catalytic mechanism. In terms of domain architecture, Radical SAM core spans 97-333; sequence ESDRGTLCIS…VTVRKTRGDD (237 aa). Cys-104 and Cys-338 are oxidised to a cystine. [4Fe-4S] cluster is bound by residues Cys-111, Cys-115, and Cys-118. S-adenosyl-L-methionine is bound by residues 164 to 165, Ser-196, 218 to 220, and Asn-295; these read GE and SLH. Cys-338 (S-methylcysteine intermediate) is an active-site residue.

The protein belongs to the radical SAM superfamily. RlmN family. Requires [4Fe-4S] cluster as cofactor.

Its subcellular location is the cytoplasm. The catalysed reaction is adenosine(2503) in 23S rRNA + 2 reduced [2Fe-2S]-[ferredoxin] + 2 S-adenosyl-L-methionine = 2-methyladenosine(2503) in 23S rRNA + 5'-deoxyadenosine + L-methionine + 2 oxidized [2Fe-2S]-[ferredoxin] + S-adenosyl-L-homocysteine. The enzyme catalyses adenosine(37) in tRNA + 2 reduced [2Fe-2S]-[ferredoxin] + 2 S-adenosyl-L-methionine = 2-methyladenosine(37) in tRNA + 5'-deoxyadenosine + L-methionine + 2 oxidized [2Fe-2S]-[ferredoxin] + S-adenosyl-L-homocysteine. Its function is as follows. Specifically methylates position 2 of adenine 2503 in 23S rRNA and position 2 of adenine 37 in tRNAs. m2A2503 modification seems to play a crucial role in the proofreading step occurring at the peptidyl transferase center and thus would serve to optimize ribosomal fidelity. This chain is Dual-specificity RNA methyltransferase RlmN, found in Neisseria meningitidis serogroup B (strain ATCC BAA-335 / MC58).